A 178-amino-acid polypeptide reads, in one-letter code: Large ribosomal subunit protein uL6 (178 aa).

It belongs to the universal ribosomal protein uL6 family. In terms of assembly, part of the 50S ribosomal subunit.

Functionally, this protein binds to the 23S rRNA, and is important in its secondary structure. It is located near the subunit interface in the base of the L7/L12 stalk, and near the tRNA binding site of the peptidyltransferase center. This chain is Large ribosomal subunit protein uL6, found in Paenarthrobacter aurescens (strain TC1).